Here is a 325-residue protein sequence, read N- to C-terminus: Elongation factor P--(R)-beta-lysine ligase (325 aa).

76–78 is a binding site for substrate; sequence SPE. ATP-binding positions include 100–102 and asparagine 109; that span reads RNE. Tyrosine 118 serves as a coordination point for substrate. 244–245 is a binding site for ATP; that stretch reads EL. Glutamate 251 is a binding site for substrate. Position 300 (glycine 300) interacts with ATP.

This sequence belongs to the class-II aminoacyl-tRNA synthetase family. EpmA subfamily. As to quaternary structure, homodimer.

The catalysed reaction is D-beta-lysine + L-lysyl-[protein] + ATP = N(6)-((3R)-3,6-diaminohexanoyl)-L-lysyl-[protein] + AMP + diphosphate + H(+). Functionally, with EpmB is involved in the beta-lysylation step of the post-translational modification of translation elongation factor P (EF-P). Catalyzes the ATP-dependent activation of (R)-beta-lysine produced by EpmB, forming a lysyl-adenylate, from which the beta-lysyl moiety is then transferred to the epsilon-amino group of a conserved specific lysine residue in EF-P. This Erwinia tasmaniensis (strain DSM 17950 / CFBP 7177 / CIP 109463 / NCPPB 4357 / Et1/99) protein is Elongation factor P--(R)-beta-lysine ligase.